A 374-amino-acid chain; its full sequence is Homoserine O-succinyltransferase (374 aa).

The AB hydrolase-1 domain occupies 47 to 357; it reads NAILVCHALS…NFGHDSFLME (311 aa). S153 functions as the Nucleophile in the catalytic mechanism. R223 serves as a coordination point for substrate. Active-site residues include D318 and H351. Residue D352 coordinates substrate.

This sequence belongs to the AB hydrolase superfamily. MetX family. As to quaternary structure, homodimer.

It is found in the cytoplasm. It carries out the reaction L-homoserine + succinyl-CoA = O-succinyl-L-homoserine + CoA. Its pathway is amino-acid biosynthesis; L-methionine biosynthesis via de novo pathway; O-succinyl-L-homoserine from L-homoserine: step 1/1. Functionally, transfers a succinyl group from succinyl-CoA to L-homoserine, forming succinyl-L-homoserine. The sequence is that of Homoserine O-succinyltransferase from Dechloromonas aromatica (strain RCB).